The chain runs to 101 residues: NAD(P)H-quinone oxidoreductase subunit 4L, chloroplastic (101 aa).

A run of 3 helical transmembrane segments spans residues 2–22 (MLEH…YGLI), 32–52 (MCLE…SDFF), and 61–81 (IFSI…SAIV).

The protein belongs to the complex I subunit 4L family. In terms of assembly, NDH is composed of at least 16 different subunits, 5 of which are encoded in the nucleus.

The protein localises to the plastid. Its subcellular location is the chloroplast thylakoid membrane. The catalysed reaction is a plastoquinone + NADH + (n+1) H(+)(in) = a plastoquinol + NAD(+) + n H(+)(out). It catalyses the reaction a plastoquinone + NADPH + (n+1) H(+)(in) = a plastoquinol + NADP(+) + n H(+)(out). Its function is as follows. NDH shuttles electrons from NAD(P)H:plastoquinone, via FMN and iron-sulfur (Fe-S) centers, to quinones in the photosynthetic chain and possibly in a chloroplast respiratory chain. The immediate electron acceptor for the enzyme in this species is believed to be plastoquinone. Couples the redox reaction to proton translocation, and thus conserves the redox energy in a proton gradient. This Gossypium hirsutum (Upland cotton) protein is NAD(P)H-quinone oxidoreductase subunit 4L, chloroplastic.